The following is a 60-amino-acid chain: DGYIKGYKGCKITCVINDDYCDTECKAEGGTYGYCWKWGLACWCEDLPDEKRWKSETNTC.

The region spanning 1-60 (DGYIKGYKGCKITCVINDDYCDTECKAEGGTYGYCWKWGLACWCEDLPDEKRWKSETNTC) is the LCN-type CS-alpha/beta domain. 4 disulfide bridges follow: C10–C60, C14–C35, C21–C42, and C25–C44.

This sequence belongs to the long (4 C-C) scorpion toxin superfamily. Sodium channel inhibitor family. Beta subfamily. In terms of tissue distribution, expressed by the venom gland.

Its subcellular location is the secreted. Functionally, beta toxins bind voltage-independently at site-4 of sodium channels (Nav) and shift the voltage of activation toward more negative potentials thereby affecting sodium channel activation and promoting spontaneous and repetitive firing. This toxin specifically acts by inducing a new current with very slow activation/deactivation kinetics due to the transformation of normal fast channels into slow ones. It possess properties of excitatory and depressant toxins. It is highly active on insects and less active on mammals. The chain is Beta-toxin BotIT2 from Buthus occitanus tunetanus (Common European scorpion).